A 419-amino-acid chain; its full sequence is UDP-N-acetylglucosamine 1-carboxyvinyltransferase (419 aa).

22 to 23 provides a ligand contact to phosphoenolpyruvate; the sequence is KN. Arginine 93 contributes to the UDP-N-acetyl-alpha-D-glucosamine binding site. Catalysis depends on cysteine 117, which acts as the Proton donor. Residue cysteine 117 is modified to 2-(S-cysteinyl)pyruvic acid O-phosphothioketal. Residues aspartate 307 and isoleucine 329 each coordinate UDP-N-acetyl-alpha-D-glucosamine.

The protein belongs to the EPSP synthase family. MurA subfamily.

Its subcellular location is the cytoplasm. It carries out the reaction phosphoenolpyruvate + UDP-N-acetyl-alpha-D-glucosamine = UDP-N-acetyl-3-O-(1-carboxyvinyl)-alpha-D-glucosamine + phosphate. The protein operates within cell wall biogenesis; peptidoglycan biosynthesis. Functionally, cell wall formation. Adds enolpyruvyl to UDP-N-acetylglucosamine. In Pseudoalteromonas atlantica (strain T6c / ATCC BAA-1087), this protein is UDP-N-acetylglucosamine 1-carboxyvinyltransferase.